The following is a 77-amino-acid chain: Pollen allergen Amb p 5a (77 aa).

A signal peptide spans 1–22; the sequence is MNNEKNVSFEFIGSTDEVDEIK. Intrachain disulfides connect Cys26/Cys61, Cys33/Cys48, Cys40/Cys54, and Cys41/Cys65.

This Ambrosia psilostachya (Western ragweed) protein is Pollen allergen Amb p 5a.